We begin with the raw amino-acid sequence, 426 residues long: ORC1-type DNA replication protein 1 (426 aa).

ATP-binding positions include 62-66 (VGKTL), Tyr-211, and Arg-223.

It belongs to the CDC6/cdc18 family.

In terms of biological role, involved in regulation of DNA replication. The chain is ORC1-type DNA replication protein 1 (cdc6a) from Haloarcula marismortui (strain ATCC 43049 / DSM 3752 / JCM 8966 / VKM B-1809) (Halobacterium marismortui).